The primary structure comprises 93 residues: Protein LSO1 (93 aa).

The interval 1-73 is disordered; it reads MHNTGKRYSE…TEKLRAKKER (73 aa). The stretch at 20 to 83 forms a coiled coil; it reads ARKRRQAYEK…DQLLAAEEEA (64 aa). Basic and acidic residues-rich tracts occupy residues 25 to 49 and 57 to 73; these read QAYE…EEGA and LIME…KKER.

It localises to the nucleus. The protein localises to the cytoplasm. Likely to play a role in iron homeostasis. This is Protein LSO1 from Saccharomyces cerevisiae (strain ATCC 204508 / S288c) (Baker's yeast).